The chain runs to 270 residues: 3-methyl-2-oxobutanoate hydroxymethyltransferase (270 aa).

Mg(2+)-binding residues include Asp53 and Asp92. 3-methyl-2-oxobutanoate contacts are provided by residues 53 to 54 (DS), Asp92, and Lys120. Glu122 is a Mg(2+) binding site. Glu189 acts as the Proton acceptor in catalysis.

The protein belongs to the PanB family. As to quaternary structure, homodecamer; pentamer of dimers. The cofactor is Mg(2+).

The protein resides in the cytoplasm. It carries out the reaction 3-methyl-2-oxobutanoate + (6R)-5,10-methylene-5,6,7,8-tetrahydrofolate + H2O = 2-dehydropantoate + (6S)-5,6,7,8-tetrahydrofolate. It functions in the pathway cofactor biosynthesis; (R)-pantothenate biosynthesis; (R)-pantoate from 3-methyl-2-oxobutanoate: step 1/2. Functionally, catalyzes the reversible reaction in which hydroxymethyl group from 5,10-methylenetetrahydrofolate is transferred onto alpha-ketoisovalerate to form ketopantoate. The sequence is that of 3-methyl-2-oxobutanoate hydroxymethyltransferase from Saccharophagus degradans (strain 2-40 / ATCC 43961 / DSM 17024).